The sequence spans 423 residues: Glutamate-1-semialdehyde 2,1-aminomutase (423 aa).

N6-(pyridoxal phosphate)lysine is present on K262.

It belongs to the class-III pyridoxal-phosphate-dependent aminotransferase family. HemL subfamily. Homodimer. Requires pyridoxal 5'-phosphate as cofactor.

It is found in the cytoplasm. The enzyme catalyses (S)-4-amino-5-oxopentanoate = 5-aminolevulinate. The protein operates within porphyrin-containing compound metabolism; protoporphyrin-IX biosynthesis; 5-aminolevulinate from L-glutamyl-tRNA(Glu): step 2/2. The polypeptide is Glutamate-1-semialdehyde 2,1-aminomutase (Saccharophagus degradans (strain 2-40 / ATCC 43961 / DSM 17024)).